A 436-amino-acid chain; its full sequence is Chromosomal replication initiator protein DnaA (436 aa).

Positions 1–69 (MLADEVLELL…AHLFEVKTGT (69 aa)) are domain I, interacts with DnaA modulators. The interval 69–99 (TKPNVEITTQTKLKSSKQNQVNIKQIKAQST) is domain II. The segment at 100–314 (LLNPAYTFEN…SAIINLNAYA (215 aa)) is domain III, AAA+ region. Residues Gly144, Gly146, Lys147, and Thr148 each coordinate ATP. The segment at 315 to 436 (NLMRQEITLD…ELKNKILTKG (122 aa)) is domain IV, binds dsDNA.

It belongs to the DnaA family. In terms of assembly, oligomerizes as a right-handed, spiral filament on DNA at oriC.

It localises to the cytoplasm. Functionally, plays an essential role in the initiation and regulation of chromosomal replication. ATP-DnaA binds to the origin of replication (oriC) to initiate formation of the DNA replication initiation complex once per cell cycle. Binds the DnaA box (a 9 base pair repeat at the origin) and separates the double-stranded (ds)DNA. Forms a right-handed helical filament on oriC DNA; dsDNA binds to the exterior of the filament while single-stranded (ss)DNA is stabiized in the filament's interior. The ATP-DnaA-oriC complex binds and stabilizes one strand of the AT-rich DNA unwinding element (DUE), permitting loading of DNA polymerase. After initiation quickly degrades to an ADP-DnaA complex that is not apt for DNA replication. Binds acidic phospholipids. This is Chromosomal replication initiator protein DnaA from Campylobacter curvus (strain 525.92).